Consider the following 217-residue polypeptide: Ribonuclease HII (217 aa).

The 190-residue stretch at 27-216 folds into the RNase H type-2 domain; it reads RTIAGIDEAG…VREHLGESRC (190 aa). A divalent metal cation contacts are provided by D33, E34, and D125.

Belongs to the RNase HII family. Requires Mn(2+) as cofactor. Mg(2+) serves as cofactor.

It is found in the cytoplasm. The catalysed reaction is Endonucleolytic cleavage to 5'-phosphomonoester.. In terms of biological role, endonuclease that specifically degrades the RNA of RNA-DNA hybrids. This Geobacter sulfurreducens (strain ATCC 51573 / DSM 12127 / PCA) protein is Ribonuclease HII.